We begin with the raw amino-acid sequence, 171 residues long: O-acetyl-ADP-ribose deacetylase 2 (171 aa).

Residues 1–171 (MNKITVIQGD…NYDLYLKLLN (171 aa)) form the Macro domain. Substrate is bound by residues 10 to 11 (DI), asparagine 24, 32 to 34 (GVD), and 121 to 125 (STGIY). Residue aspartate 34 is the Proton acceptor of the active site.

The protein belongs to the MacroD-type family. YmdB subfamily. Homodimer. Interacts with RNase III.

It carries out the reaction 3''-O-acetyl-ADP-D-ribose + H2O = ADP-D-ribose + acetate + H(+). The enzyme catalyses 2''-O-acetyl-ADP-D-ribose + H2O = ADP-D-ribose + acetate + H(+). Deacetylates O-acetyl-ADP ribose to yield ADP-ribose and free acetate. Down-regulates ribonuclease 3 (RNase III) activity. Acts by interacting directly with the region of the ribonuclease that is required for dimerization/activation. The sequence is that of O-acetyl-ADP-ribose deacetylase 2 from Pantoea vagans (strain C9-1) (Pantoea agglomerans (strain C9-1)).